A 756-amino-acid polypeptide reads, in one-letter code: Deoxynucleotidyltransferase terminal-interacting protein 2 (756 aa).

A disordered region spans residues methionine 1 to histidine 99. The segment covering alanine 9–serine 21 has biased composition (low complexity). Phosphoserine is present on serine 21. Composition is skewed to polar residues over residues proline 35–glutamine 55 and glutamate 80–valine 96. A Phosphoserine modification is found at serine 117. Phosphothreonine is present on threonine 129. A phosphoserine mark is found at serine 141, serine 145, serine 148, serine 184, and serine 194. The disordered stretch occupies residues proline 156–tyrosine 261. Over residues arginine 201–lysine 211 the composition is skewed to basic residues. Residues lysine 217 and lysine 220 each participate in a glycyl lysine isopeptide (Lys-Gly) (interchain with G-Cter in SUMO2) cross-link. The residue at position 232 (threonine 232) is a Phosphothreonine. Serine 239, serine 251, and serine 253 each carry phosphoserine. Over residues arginine 242 to asparagine 256 the composition is skewed to polar residues. Glycyl lysine isopeptide (Lys-Gly) (interchain with G-Cter in SUMO2) cross-links involve residues lysine 257, lysine 316, and lysine 321. A phosphoserine mark is found at serine 324 and serine 330. Residue lysine 345 forms a Glycyl lysine isopeptide (Lys-Gly) (interchain with G-Cter in SUMO2) linkage. Phosphoserine is present on serine 381. Lysine 384 participates in a covalent cross-link: Glycyl lysine isopeptide (Lys-Gly) (interchain with G-Cter in SUMO2). Serine 434 and serine 512 each carry phosphoserine. Residues leucine 505–phenylalanine 542 adopt a coiled-coil conformation. The disordered stretch occupies residues lysine 510 to aspartate 547. The interval phenylalanine 548–glutamine 605 is tdBR region; mediates interaction with DNTT. A Glycyl lysine isopeptide (Lys-Gly) (interchain with G-Cter in SUMO2) cross-link involves residue lysine 558. Residue serine 569 is modified to Phosphoserine. Glycyl lysine isopeptide (Lys-Gly) (interchain with G-Cter in SUMO2) cross-links involve residues lysine 584 and lysine 606. Phosphothreonine is present on threonine 610. Glycyl lysine isopeptide (Lys-Gly) (interchain with G-Cter in SUMO2) cross-links involve residues lysine 626, lysine 649, lysine 658, lysine 686, and lysine 731.

Forms a ternary complex with DNTT and core histone; interaction with PCNA releases DNTT and H2A/H2B histones from this ternary complex. Interacts with ESR1, ESR2, PPARG and RXRA. Part of the small subunit (SSU) processome, composed of more than 70 proteins and the RNA chaperone small nucleolar RNA (snoRNA) U3. As to expression, widely expressed with higher levels in testis.

The protein localises to the nucleus. It is found in the nucleolus. In terms of biological role, regulates the transcriptional activity of DNTT and ESR1. May function as a chromatin remodeling protein. Part of the small subunit (SSU) processome, first precursor of the small eukaryotic ribosomal subunit. During the assembly of the SSU processome in the nucleolus, many ribosome biogenesis factors, an RNA chaperone and ribosomal proteins associate with the nascent pre-rRNA and work in concert to generate RNA folding, modifications, rearrangements and cleavage as well as targeted degradation of pre-ribosomal RNA by the RNA exosome. The polypeptide is Deoxynucleotidyltransferase terminal-interacting protein 2 (Homo sapiens (Human)).